Here is a 345-residue protein sequence, read N- to C-terminus: Aspartate-semialdehyde dehydrogenase (345 aa).

NADP(+) contacts are provided by residues 11-14 (TGQV) and 39-40 (RS). Arginine 99 is a binding site for phosphate. Cysteine 130 acts as the Acyl-thioester intermediate in catalysis. Position 157 (glutamine 157) interacts with substrate. NADP(+) is bound at residue 160-161 (SG). Lysine 227 serves as a coordination point for phosphate. A substrate-binding site is contributed by arginine 249. The active-site Proton acceptor is histidine 256. Asparagine 325 is an NADP(+) binding site.

The protein belongs to the aspartate-semialdehyde dehydrogenase family. In terms of assembly, homodimer.

It carries out the reaction L-aspartate 4-semialdehyde + phosphate + NADP(+) = 4-phospho-L-aspartate + NADPH + H(+). It participates in amino-acid biosynthesis; L-lysine biosynthesis via DAP pathway; (S)-tetrahydrodipicolinate from L-aspartate: step 2/4. It functions in the pathway amino-acid biosynthesis; L-methionine biosynthesis via de novo pathway; L-homoserine from L-aspartate: step 2/3. Its pathway is amino-acid biosynthesis; L-threonine biosynthesis; L-threonine from L-aspartate: step 2/5. Functionally, catalyzes the NADPH-dependent formation of L-aspartate-semialdehyde (L-ASA) by the reductive dephosphorylation of L-aspartyl-4-phosphate. This is Aspartate-semialdehyde dehydrogenase from Mycobacterium bovis (strain ATCC BAA-935 / AF2122/97).